A 202-amino-acid chain; its full sequence is Imidazoleglycerol-phosphate dehydratase (202 aa).

This sequence belongs to the imidazoleglycerol-phosphate dehydratase family.

The protein resides in the cytoplasm. It catalyses the reaction D-erythro-1-(imidazol-4-yl)glycerol 3-phosphate = 3-(imidazol-4-yl)-2-oxopropyl phosphate + H2O. It functions in the pathway amino-acid biosynthesis; L-histidine biosynthesis; L-histidine from 5-phospho-alpha-D-ribose 1-diphosphate: step 6/9. In Brucella suis (strain ATCC 23445 / NCTC 10510), this protein is Imidazoleglycerol-phosphate dehydratase.